The chain runs to 313 residues: MDKKYAAARLLPPIDASYQPARSVTKIPATSSLEEILEVLERDGGVILTDFVPKETMDKIDEELEPYTKTIPDSDSYDDFIGKKTLVIAGLISKSDTLANILDTNETIDKLLKIILEERYPAVFEGHTEELVIDPLLSISMAFHVGQGSPRQALHRDDMVFSSKHHPNMKINEVDGFSCFIAGSNVTRENGGTMVILGSHKWEHDRRGRPDEVSFLEMERGSAFIFLSTMAHGAGYNTIPGEIRKIMNLVFCRGTLRQEENQFLCNPRSKVLKMSPKMQTLLGFKKPAGTWLGMVDNDDPAKDLPAIYEKIMQ.

Fe cation is bound by residues H155, D157, and H232.

It belongs to the PhyH family. As to quaternary structure, homodimer. It depends on Fe cation as a cofactor.

Its pathway is mycotoxin biosynthesis. Its function is as follows. Aminotransferase; part of the gene cluster that mediates the biosynthesis of swainsonine (SW), a cytotoxic fungal alkaloid and a potential cancer therapy drug. Swainsonine production occurs via a multibranched pathway and is dispensable for fungal colonization of plants and infection of insect hosts. The first step of swainsonine biosynthesis is the production of the precursor pipecolic acid (PA) via conversion of L-lysine (Lys) to 1-piperideine-6-carboxylate (P6C) by the aminotransferase swnA, the latter being further reduced to PA by the reductase swnR. The PKS-NRPS hybrid synthetase swnK uptakes and condensates PA and malonyl-CoA with and without skipping of the ketoreductase (KR) domain in order to produce 3 intermediates, 1-oxoindolizidine, (1S)-1-hydroxyindolizin, and (1R)-1-hydroxyindolizine; with the transisomer (1S)-1-hydroxyindolizin being predominant. The terminal thioester reductase (TE) domain of swnK is involved in reduction of the thioester bond to release the intermediate aldehydes. The oxidoreductase swnN could contribute to the reduction of 1-oxoindolizidine to (1S)-1-hydroxyindolizin and (1R)-1-hydroxyindolizine, contributing to the major route of SW production. The dioxygenase swnH2 would be responsible for the oxidization of (1R)-1-hydroxyindolizine into (1R,2S)-1,2-dihydroxyindolizine and of (1S)-1-hydroxyindolizin to yield both (1R,2S)-1,2-dihydroxyindolizine and (1S,2S)-1,2-dihydroxyindolizine. The dioxygenase swnH1 then performs the conversion of the 1,2-dihydroxyindolizine epimers to SW. In Arthroderma benhamiae (strain ATCC MYA-4681 / CBS 112371) (Trichophyton mentagrophytes), this protein is Dioxygenase swnH2.